A 475-amino-acid polypeptide reads, in one-letter code: Beta-amyrin 16-alpha-hydroxylase CYP87D16 (475 aa).

The chain crosses the membrane as a helical span at residues 3–23; the sequence is VVGLIGVAVVTILITQYVYKW. Cys-423 lines the heme pocket.

Belongs to the cytochrome P450 family. Requires heme as cofactor.

The protein localises to the membrane. It catalyses the reaction beta-amyrin + reduced [NADPH--hemoprotein reductase] + O2 = 16alpha-hydroxy-beta-amyrin + oxidized [NADPH--hemoprotein reductase] + H2O + H(+). Involved in the biosynthetic pathway of maesasaponins, which are oleanane-type saponins with diverse biological activities. Catalyzes the C-16alpha oxidation of beta-amyrin to form 16alpha-hydroxy-beta-amyrin. In Maesa lanceolata (False assegai), this protein is Beta-amyrin 16-alpha-hydroxylase CYP87D16.